The primary structure comprises 576 residues: Dihydroxy-acid dehydratase (576 aa).

Residue C56 participates in [2Fe-2S] cluster binding. D88 lines the Mg(2+) pocket. Residue C129 participates in [2Fe-2S] cluster binding. Positions 130 and 131 each coordinate Mg(2+). Residue K131 is modified to N6-carboxylysine. C201 lines the [2Fe-2S] cluster pocket. Residue E453 coordinates Mg(2+). S479 acts as the Proton acceptor in catalysis.

The protein belongs to the IlvD/Edd family. As to quaternary structure, homodimer. Requires [2Fe-2S] cluster as cofactor. Mg(2+) is required as a cofactor.

It carries out the reaction (2R)-2,3-dihydroxy-3-methylbutanoate = 3-methyl-2-oxobutanoate + H2O. The catalysed reaction is (2R,3R)-2,3-dihydroxy-3-methylpentanoate = (S)-3-methyl-2-oxopentanoate + H2O. The protein operates within amino-acid biosynthesis; L-isoleucine biosynthesis; L-isoleucine from 2-oxobutanoate: step 3/4. It participates in amino-acid biosynthesis; L-valine biosynthesis; L-valine from pyruvate: step 3/4. Functions in the biosynthesis of branched-chain amino acids. Catalyzes the dehydration of (2R,3R)-2,3-dihydroxy-3-methylpentanoate (2,3-dihydroxy-3-methylvalerate) into 2-oxo-3-methylpentanoate (2-oxo-3-methylvalerate) and of (2R)-2,3-dihydroxy-3-methylbutanoate (2,3-dihydroxyisovalerate) into 2-oxo-3-methylbutanoate (2-oxoisovalerate), the penultimate precursor to L-isoleucine and L-valine, respectively. The protein is Dihydroxy-acid dehydratase of Parvibaculum lavamentivorans (strain DS-1 / DSM 13023 / NCIMB 13966).